The sequence spans 733 residues: 1,4-alpha-glucan branching enzyme GlgB (733 aa).

Asp-413 functions as the Nucleophile in the catalytic mechanism. The active-site Proton donor is Glu-466.

This sequence belongs to the glycosyl hydrolase 13 family. GlgB subfamily. Monomer.

It carries out the reaction Transfers a segment of a (1-&gt;4)-alpha-D-glucan chain to a primary hydroxy group in a similar glucan chain.. Its pathway is glycan biosynthesis; glycogen biosynthesis. Functionally, catalyzes the formation of the alpha-1,6-glucosidic linkages in glycogen by scission of a 1,4-alpha-linked oligosaccharide from growing alpha-1,4-glucan chains and the subsequent attachment of the oligosaccharide to the alpha-1,6 position. The protein is 1,4-alpha-glucan branching enzyme GlgB of Leifsonia xyli subsp. xyli (strain CTCB07).